The primary structure comprises 151 residues: 3-dehydroquinate dehydratase (151 aa).

Tyr26 functions as the Proton acceptor in the catalytic mechanism. 3 residues coordinate substrate: Asn75, His81, and Asp88. His101 functions as the Proton donor in the catalytic mechanism. Substrate-binding positions include 102–103 (LS) and Arg112.

Belongs to the type-II 3-dehydroquinase family. In terms of assembly, homododecamer.

It catalyses the reaction 3-dehydroquinate = 3-dehydroshikimate + H2O. Its pathway is metabolic intermediate biosynthesis; chorismate biosynthesis; chorismate from D-erythrose 4-phosphate and phosphoenolpyruvate: step 3/7. Its function is as follows. Catalyzes a trans-dehydration via an enolate intermediate. In Shewanella denitrificans (strain OS217 / ATCC BAA-1090 / DSM 15013), this protein is 3-dehydroquinate dehydratase.